A 115-amino-acid chain; its full sequence is Putative septation protein SpoVG (115 aa).

The segment at 88–115 is disordered; that stretch reads PGTIATSEVSSQLEESDSDKTLSEDLKA. The span at 91–100 shows a compositional bias: polar residues; it reads IATSEVSSQL. Residues 105–115 are compositionally biased toward basic and acidic residues; it reads SDKTLSEDLKA.

The protein belongs to the SpoVG family.

Its function is as follows. Could be involved in septation. This chain is Putative septation protein SpoVG, found in Macrococcus caseolyticus (strain JCSC5402) (Macrococcoides caseolyticum).